A 590-amino-acid chain; its full sequence is FAD-linked oxidoreductase malF (590 aa).

Positions M1 to T18 are cleaved as a signal peptide. N44, N80, N103, N178, and N396 each carry an N-linked (GlcNAc...) asparagine glycan. Positions A117–D303 constitute an FAD-binding PCMH-type domain.

Belongs to the oxygen-dependent FAD-linked oxidoreductase family. Requires FAD as cofactor.

In terms of biological role, FAD-linked oxidoreductase; part of the gene cluster that mediates the biosynthesis of malbrancheamide, a dichlorinated fungal indole alkaloid that belongs to a family of natural products containing a characteristic bicyclo[2.2.2]diazaoctane core. The first step of malbrancheamide biosynthesis involves coupling of L-proline and L-tryptophan by malG, a bimodular NRPS, to produce L-Pro-L-Trp aldehyde through reductive offloading. This compound undergoes spontaneous cyclization and dehydration to give a dienamine which is reverse prenylated at C-2 by malE. The other prenyltransferase present in the cluster, malB, displays modest activity, suggesting that may be a redundant gene in the pathway. Subsequently, a [4+2] Diels-Alder cyclo-addition catalyzed by the bifunctional enzyme malC forms the characteristic bicyclo[2.2.2]diazaoctane ring of premalbrancheamid. Finally, the flavin-dependent halogenase malA catalyzes the iterative dichlorination of the indole ring of premalbrancheamide to yield C-9 monochlorinated malbrancheamide B, C-8 monochlorinated isomalbrancheamide B, and dichlorinated malbrancheamide. MalA is also able to brominate premalbrancheamide at C-9 to yield malbrancheamide C, and, to a lesser extend, at C-8 to yield isomalbrancheamide C. Finally, malA can brominate C-9 monochlorinated malbrancheamide B at C-8 to yield malbrancheamide D, or C-8 monochlorinated isomalbrancheamide B at C-9 to produce isomalbrancheamide D. This Malbranchea aurantiaca protein is FAD-linked oxidoreductase malF.